The chain runs to 275 residues: NH(3)-dependent NAD(+) synthetase (275 aa).

46–53 serves as a coordination point for ATP; that stretch reads GISGGQDS. Asp52 lines the Mg(2+) pocket. Residue Arg140 coordinates deamido-NAD(+). Thr160 lines the ATP pocket. Glu165 is a binding site for Mg(2+). Deamido-NAD(+) is bound by residues Lys173 and Asp180. The ATP site is built by Lys189 and Thr211. 260-261 provides a ligand contact to deamido-NAD(+); the sequence is HK.

The protein belongs to the NAD synthetase family. As to quaternary structure, homodimer.

It carries out the reaction deamido-NAD(+) + NH4(+) + ATP = AMP + diphosphate + NAD(+) + H(+). It functions in the pathway cofactor biosynthesis; NAD(+) biosynthesis; NAD(+) from deamido-NAD(+) (ammonia route): step 1/1. Catalyzes the ATP-dependent amidation of deamido-NAD to form NAD. Uses ammonia as a nitrogen source. This Enterobacter sp. (strain 638) protein is NH(3)-dependent NAD(+) synthetase.